The primary structure comprises 213 residues: Octanoyltransferase (213 aa).

The region spanning 32 to 207 (DHTPDEIWLV…KLLALLNNPP (176 aa)) is the BPL/LPL catalytic domain. Substrate-binding positions include 71–78 (RGGQVTYH), 138–140 (SLG), and 151–153 (GLA). The active-site Acyl-thioester intermediate is Cys-169.

Belongs to the LipB family.

The protein localises to the cytoplasm. It carries out the reaction octanoyl-[ACP] + L-lysyl-[protein] = N(6)-octanoyl-L-lysyl-[protein] + holo-[ACP] + H(+). It functions in the pathway protein modification; protein lipoylation via endogenous pathway; protein N(6)-(lipoyl)lysine from octanoyl-[acyl-carrier-protein]: step 1/2. Catalyzes the transfer of endogenously produced octanoic acid from octanoyl-acyl-carrier-protein onto the lipoyl domains of lipoate-dependent enzymes. Lipoyl-ACP can also act as a substrate although octanoyl-ACP is likely to be the physiological substrate. This Enterobacter sp. (strain 638) protein is Octanoyltransferase.